Reading from the N-terminus, the 375-residue chain is Alcohol dehydrogenase 6 (375 aa).

Phosphoserine is present on serine 23. Zn(2+) is bound by residues cysteine 47, histidine 69, cysteine 99, cysteine 102, cysteine 105, cysteine 113, and cysteine 175. NAD(+)-binding positions include 200 to 205 (GLGGVG), aspartate 224, lysine 229, 293 to 295 (VGL), and arginine 370.

The protein belongs to the zinc-containing alcohol dehydrogenase family. Class-V subfamily. Dimer. Requires Zn(2+) as cofactor.

Its subcellular location is the cytoplasm. It carries out the reaction a primary alcohol + NAD(+) = an aldehyde + NADH + H(+). The enzyme catalyses a secondary alcohol + NAD(+) = a ketone + NADH + H(+). Its function is as follows. Alcohol dehydrogenase. Catalyzes the NAD-dependent oxidation of primary alcohols to the corresponding aldehydes. Oxidizes secondary alcohols to the corresponding ketones. In Pongo abelii (Sumatran orangutan), this protein is Alcohol dehydrogenase 6 (ADH6).